Reading from the N-terminus, the 145-residue chain is MKHYEVLFIVKPTLQDDEVKTKVDFVKEVITKNGGEIAAVVEMGTRKLAYKIDKYERGVYFVIYFTAPTKLIAELVRNLRINEDIIRFLTIKYENKKEISAWEKLSHGVKLSENMKKNERKAPKEPVKKDEEENKESEEEITSEE.

Residues 113-132 (ENMKKNERKAPKEPVKKDEE) are compositionally biased toward basic and acidic residues. The disordered stretch occupies residues 113–145 (ENMKKNERKAPKEPVKKDEEENKESEEEITSEE). Acidic residues predominate over residues 133–145 (ENKESEEEITSEE).

It belongs to the bacterial ribosomal protein bS6 family.

In terms of biological role, binds together with bS18 to 16S ribosomal RNA. The protein is Small ribosomal subunit protein bS6 of Campylobacter hominis (strain ATCC BAA-381 / DSM 21671 / CCUG 45161 / LMG 19568 / NCTC 13146 / CH001A).